Reading from the N-terminus, the 98-residue chain is NADH-ubiquinone oxidoreductase chain 4L (98 aa).

A run of 3 helical transmembrane segments spans residues 1 to 21 (MEQI…GVLT), 28 to 48 (STLL…VLLI), and 61 to 81 (LILL…LVTI).

Belongs to the complex I subunit 4L family. In terms of assembly, core subunit of respiratory chain NADH dehydrogenase (Complex I) which is composed of 45 different subunits.

Its subcellular location is the mitochondrion inner membrane. The enzyme catalyses a ubiquinone + NADH + 5 H(+)(in) = a ubiquinol + NAD(+) + 4 H(+)(out). Functionally, core subunit of the mitochondrial membrane respiratory chain NADH dehydrogenase (Complex I) which catalyzes electron transfer from NADH through the respiratory chain, using ubiquinone as an electron acceptor. Part of the enzyme membrane arm which is embedded in the lipid bilayer and involved in proton translocation. This is NADH-ubiquinone oxidoreductase chain 4L (MT-ND4L) from Monodelphis domestica (Gray short-tailed opossum).